The chain runs to 521 residues: Putative FNIP repeat-containing protein L162 (521 aa).

FNIP repeat units lie at residues 179 to 221 (FNKS…LGYK) and 222 to 263 (YNYP…MGGR).

The polypeptide is Putative FNIP repeat-containing protein L162 (Acanthamoeba polyphaga mimivirus (APMV)).